The primary structure comprises 353 residues: tRNA N6-adenosine threonylcarbamoyltransferase (353 aa).

Fe cation is bound by residues histidine 111 and histidine 115. Residues 148 to 152 (LVSGG), aspartate 181, glycine 194, and asparagine 286 each bind substrate. Aspartate 314 provides a ligand contact to Fe cation.

It belongs to the KAE1 / TsaD family. It depends on Fe(2+) as a cofactor.

Its subcellular location is the cytoplasm. It carries out the reaction L-threonylcarbamoyladenylate + adenosine(37) in tRNA = N(6)-L-threonylcarbamoyladenosine(37) in tRNA + AMP + H(+). Its function is as follows. Required for the formation of a threonylcarbamoyl group on adenosine at position 37 (t(6)A37) in tRNAs that read codons beginning with adenine. Is involved in the transfer of the threonylcarbamoyl moiety of threonylcarbamoyl-AMP (TC-AMP) to the N6 group of A37, together with TsaE and TsaB. TsaD likely plays a direct catalytic role in this reaction. This is tRNA N6-adenosine threonylcarbamoyltransferase from Blochmanniella floridana.